Reading from the N-terminus, the 367-residue chain is MRLHSRQASNPHRQYSAAQSLHSSSDDSEHKEIPSTMGWAKRLMRWMVTVDQPHTFETSLKNYQSLAHVTNYIFFCGGRLRTVAKTKYLSVLVLVMLIAPIVLFSVFETGYLWKHVAGAKPCVVLCYYFWTLCFASFISTGATDPGTLPRNIHLAQLQDDYKLPLEYYSIITLPSPVANAPVRLKYCTTCRIWRPPRASHCAVCDSCILSFDHHCDWLNNCIGQRNHRYFLAFLFSSVLSSIWLLTCCALKLRHAGSPSAAPVSLLLICYCAVSIWYPLLLAIYHLFLTGTQQTTHEYLKAVDSRNPIFHKVTHPERNPFVTGSCARNMLLLMCQPRGYDFLHTRSEHQAGDWRFFRLPIPHSFEKV.

Over residues Met-1 to Ser-23 the composition is skewed to polar residues. Positions Met-1–Glu-32 are disordered. Residues Met-1 to Lys-87 are Cytoplasmic-facing. The chain crosses the membrane as a helical span at residues Tyr-88–Glu-108. Residues Thr-109–Pro-121 are Lumenal-facing. A helical transmembrane segment spans residues Cys-122 to Ala-142. Residues Thr-143 to Tyr-229 are Cytoplasmic-facing. One can recognise a DHHC domain in the interval Lys-185–Phe-235. The active-site S-palmitoyl cysteine intermediate is the Cys-215. The helical transmembrane segment at Phe-230 to Leu-250 threads the bilayer. The Lumenal portion of the chain corresponds to Lys-251 to Pro-262. Residues Val-263–Ile-283 form a helical membrane-spanning segment. Over Tyr-284–Val-367 the chain is Cytoplasmic.

This sequence belongs to the DHHC palmitoyltransferase family. ERF2/ZDHHC9 subfamily. Interacts with ERF4. Autopalmitoylated.

The protein resides in the endoplasmic reticulum membrane. The catalysed reaction is L-cysteinyl-[protein] + hexadecanoyl-CoA = S-hexadecanoyl-L-cysteinyl-[protein] + CoA. Functionally, the ERF2-ERF4 complex is a palmitoyltransferase specific for Ras proteins. The chain is Palmitoyltransferase ERF2 (ERF2) from Eremothecium gossypii (strain ATCC 10895 / CBS 109.51 / FGSC 9923 / NRRL Y-1056) (Yeast).